Here is a 62-residue protein sequence, read N- to C-terminus: Bacteriocin lactacin-F subunit LafX (62 aa).

Residues 1–14 (MKLNDKELSKIVGG) constitute a propeptide that is removed on maturation.

The protein belongs to the bacteriocin class IIB family. In terms of assembly, this bacteriocin depends upon the complementation of two peptides for activity: LafA and LafX. Associated with a 180 kDa bacteriocin complex.

Heat stable bacteriocin active against Enterococcus faecalis and other Lactobacilli. In Lactobacillus johnsonii (strain CNCM I-12250 / La1 / NCC 533), this protein is Bacteriocin lactacin-F subunit LafX (lafX).